We begin with the raw amino-acid sequence, 305 residues long: UDP-3-O-acyl-N-acetylglucosamine deacetylase (305 aa).

Positions 79, 238, and 242 each coordinate Zn(2+). The active-site Proton donor is the H265.

This sequence belongs to the LpxC family. The cofactor is Zn(2+).

It catalyses the reaction a UDP-3-O-[(3R)-3-hydroxyacyl]-N-acetyl-alpha-D-glucosamine + H2O = a UDP-3-O-[(3R)-3-hydroxyacyl]-alpha-D-glucosamine + acetate. The protein operates within glycolipid biosynthesis; lipid IV(A) biosynthesis; lipid IV(A) from (3R)-3-hydroxytetradecanoyl-[acyl-carrier-protein] and UDP-N-acetyl-alpha-D-glucosamine: step 2/6. Catalyzes the hydrolysis of UDP-3-O-myristoyl-N-acetylglucosamine to form UDP-3-O-myristoylglucosamine and acetate, the committed step in lipid A biosynthesis. This Vibrio cholerae serotype O1 (strain ATCC 39541 / Classical Ogawa 395 / O395) protein is UDP-3-O-acyl-N-acetylglucosamine deacetylase.